The chain runs to 136 residues: ATP synthase epsilon chain (136 aa).

It belongs to the ATPase epsilon chain family. F-type ATPases have 2 components, CF(1) - the catalytic core - and CF(0) - the membrane proton channel. CF(1) has five subunits: alpha(3), beta(3), gamma(1), delta(1), epsilon(1). CF(0) has three main subunits: a, b and c.

The protein localises to the cell membrane. Produces ATP from ADP in the presence of a proton gradient across the membrane. This is ATP synthase epsilon chain from Macrococcus caseolyticus (strain JCSC5402) (Macrococcoides caseolyticum).